We begin with the raw amino-acid sequence, 176 residues long: MSRVGKSPIALQGAEVKLADGAITVKGPLGTITQAINPLVNVANNDGTLNLAPVDESREANALSGTMRAIIANAVHGVTKGFERKLTLVGVGYRAQAQGDKLNLSLGFSHPVVHQMPEGVKAETPTQTEIVIKGINKQQVGQVAAEVRGYRPPEPYKGKGVRYSDEVVILKETKKK.

The protein belongs to the universal ribosomal protein uL6 family. Part of the 50S ribosomal subunit.

Its function is as follows. This protein binds to the 23S rRNA, and is important in its secondary structure. It is located near the subunit interface in the base of the L7/L12 stalk, and near the tRNA binding site of the peptidyltransferase center. This is Large ribosomal subunit protein uL6 from Burkholderia lata (strain ATCC 17760 / DSM 23089 / LMG 22485 / NCIMB 9086 / R18194 / 383).